Consider the following 414-residue polypeptide: S-adenosylmethionine synthase (414 aa).

His11 is an ATP binding site. Mg(2+) is bound at residue Asp13. Glu39 contacts K(+). L-methionine is bound by residues Glu52 and Gln95. Residues 95 to 105 form a flexible loop region; it reads QSPDIAQGVNM. ATP is bound by residues 169–171, 245–246, Asp254, 260–261, Ala277, and Lys281; these read DGK, KF, and RK. Asp254 contacts L-methionine. Lys285 contacts L-methionine.

It belongs to the AdoMet synthase family. In terms of assembly, homotetramer; dimer of dimers. Mg(2+) is required as a cofactor. It depends on K(+) as a cofactor.

The protein resides in the cytoplasm. The catalysed reaction is L-methionine + ATP + H2O = S-adenosyl-L-methionine + phosphate + diphosphate. It participates in amino-acid biosynthesis; S-adenosyl-L-methionine biosynthesis; S-adenosyl-L-methionine from L-methionine: step 1/1. Functionally, catalyzes the formation of S-adenosylmethionine (AdoMet) from methionine and ATP. The overall synthetic reaction is composed of two sequential steps, AdoMet formation and the subsequent tripolyphosphate hydrolysis which occurs prior to release of AdoMet from the enzyme. In Synechococcus sp. (strain JA-2-3B'a(2-13)) (Cyanobacteria bacterium Yellowstone B-Prime), this protein is S-adenosylmethionine synthase.